The chain runs to 1014 residues: Probable LRR receptor-like serine/threonine-protein kinase At1g07650 (1014 aa).

Positions 1–23 are cleaved as a signal peptide; it reads MIYLHRIYFIIVLFTLIFHGRLG. The Extracellular portion of the chain corresponds to 24–619; sequence FSDNNKLHEA…KPPVYYDTKD (596 aa). N-linked (GlcNAc...) asparagine glycosylation is found at asparagine 76, asparagine 87, and asparagine 101. LRR repeat units lie at residues 89 to 112, 113 to 137, 139 to 160, 161 to 184, 186 to 207, 208 to 234, 256 to 279, 280 to 304, 305 to 327, 329 to 352, and 354 to 376; these read SCHV…EFSK, LRHL…WASM, LEDL…LTRL, TMLR…IGQL, HLEK…KLGL, LKNL…NWTR, LTSL…PLKN, LESI…IGDL, KKLK…SFEN, KKAD…FVER, and KNVD…DCNR. N-linked (GlcNAc...) asparagine glycosylation occurs at asparagine 165. Residues asparagine 210, asparagine 220, and asparagine 231 are each glycosylated (N-linked (GlcNAc...) asparagine). N-linked (GlcNAc...) asparagine glycans are attached at residues asparagine 362, asparagine 389, asparagine 474, asparagine 481, and asparagine 511. An LRR 12 repeat occupies 516 to 539; it reads LHFAEIIFTDDNTLYSLGKRLFDI. A glycan (N-linked (GlcNAc...) asparagine) is linked at asparagine 570. A helical transmembrane segment spans residues 620-640; that stretch reads IILKVGVPVAAATLLLFIIVG. The Cytoplasmic segment spans residues 641-1014; sequence VFWKKRRDKN…DAEEKTGLLD (374 aa). A Phosphothreonine modification is found at threonine 667. The region spanning 678-960 is the Protein kinase domain; sequence FDVTRKIGEG…EGKTAMQELL (283 aa). Residues 684–692 and lysine 706 contribute to the ATP site; that span reads IGEGGFGSV. Tyrosine 751 carries the post-translational modification Phosphotyrosine. The active-site Proton acceptor is aspartate 805. 2 positions are modified to phosphoserine: serine 809 and serine 838. Threonine 839 and threonine 844 each carry phosphothreonine. Tyrosine 852 is modified (phosphotyrosine). Serine 989 carries the phosphoserine modification. A compositionally biased stretch (polar residues) spans 989-1002; that stretch reads SFSTSGPRTASANS. Positions 989 to 1014 are disordered; that stretch reads SFSTSGPRTASANSLVDAEEKTGLLD.

It belongs to the protein kinase superfamily. Ser/Thr protein kinase family.

It is found in the membrane. It carries out the reaction L-seryl-[protein] + ATP = O-phospho-L-seryl-[protein] + ADP + H(+). The catalysed reaction is L-threonyl-[protein] + ATP = O-phospho-L-threonyl-[protein] + ADP + H(+). The protein is Probable LRR receptor-like serine/threonine-protein kinase At1g07650 of Arabidopsis thaliana (Mouse-ear cress).